We begin with the raw amino-acid sequence, 156 residues long: tRNA (cytidine(34)-2'-O)-methyltransferase (156 aa).

Residues Gly-102, Leu-124, and Ser-132 each contribute to the S-adenosyl-L-methionine site.

Belongs to the class IV-like SAM-binding methyltransferase superfamily. RNA methyltransferase TrmH family. TrmL subfamily. In terms of assembly, homodimer.

It is found in the cytoplasm. The enzyme catalyses cytidine(34) in tRNA + S-adenosyl-L-methionine = 2'-O-methylcytidine(34) in tRNA + S-adenosyl-L-homocysteine + H(+). It carries out the reaction 5-carboxymethylaminomethyluridine(34) in tRNA(Leu) + S-adenosyl-L-methionine = 5-carboxymethylaminomethyl-2'-O-methyluridine(34) in tRNA(Leu) + S-adenosyl-L-homocysteine + H(+). Its function is as follows. Methylates the ribose at the nucleotide 34 wobble position in the two leucyl isoacceptors tRNA(Leu)(CmAA) and tRNA(Leu)(cmnm5UmAA). Catalyzes the methyl transfer from S-adenosyl-L-methionine to the 2'-OH of the wobble nucleotide. The chain is tRNA (cytidine(34)-2'-O)-methyltransferase from Burkholderia ambifaria (strain ATCC BAA-244 / DSM 16087 / CCUG 44356 / LMG 19182 / AMMD) (Burkholderia cepacia (strain AMMD)).